A 145-amino-acid polypeptide reads, in one-letter code: Ornithine decarboxylase antizyme (145 aa).

This sequence belongs to the ODC antizyme family. As to quaternary structure, interacts with ODC1 and thereby sterically blocks ODC homodimerization.

Its function is as follows. Ornithine decarboxylase (ODC) antizyme protein that negatively regulates ODC activity and intracellular polyamine biosynthesis and uptake in response to increased intracellular polyamine levels. Binds to ODC monomers, inhibiting the assembly of the functional ODC homodimer, and targets the monomers for ubiquitin-independent proteolytic destruction by the 26S proteasome. The chain is Ornithine decarboxylase antizyme from Onchocerca volvulus.